A 66-amino-acid polypeptide reads, in one-letter code: ATP synthase subunit c (66 aa).

2 helical membrane-spanning segments follow: residues 3–23 and 45–65; these read LTFFGLCLACMGVSLAEGMLM and IMGIAFIEGTFLVTLVFSFVI.

Belongs to the ATPase C chain family. F-type ATPases have 2 components, F(1) - the catalytic core - and F(0) - the membrane proton channel. F(1) has five subunits: alpha(3), beta(3), gamma(1), delta(1), epsilon(1). F(0) has three main subunits: a(1), b(2) and c(10-14). The alpha and beta chains form an alternating ring which encloses part of the gamma chain. F(1) is attached to F(0) by a central stalk formed by the gamma and epsilon chains, while a peripheral stalk is formed by the delta and b chains.

It localises to the cell membrane. Its function is as follows. F(1)F(0) ATP synthase produces ATP from ADP in the presence of a proton or sodium gradient. F-type ATPases consist of two structural domains, F(1) containing the extramembraneous catalytic core and F(0) containing the membrane proton channel, linked together by a central stalk and a peripheral stalk. During catalysis, ATP synthesis in the catalytic domain of F(1) is coupled via a rotary mechanism of the central stalk subunits to proton translocation. Key component of the F(0) channel; it plays a direct role in translocation across the membrane. A homomeric c-ring of between 10-14 subunits forms the central stalk rotor element with the F(1) delta and epsilon subunits. The sequence is that of ATP synthase subunit c (atpE) from Streptococcus oralis.